The following is a 151-amino-acid chain: MKVVAVNAGFNVTLQMAYPPNDLLVELHNGLNTYGINWWHYFVPSLVNDDTPAGKLFASTLSKLSYYPRSGAHLDSHQSCSCSIGGTVDTELKVIGVENVRVTDLSAAPHPPGGNTWCTAAMIGARATDLILGKPLVANLPPEDVPVFTTS.

Belongs to the GMC oxidoreductase family.

The protein resides in the virion. The sequence is that of Putative truncated GMC-type inactive oxidoreductase L893 from Acanthamoeba polyphaga (Amoeba).